We begin with the raw amino-acid sequence, 668 residues long: Bestrophin-3 (668 aa).

Topologically, residues methionine 1–leucine 31 are cytoplasmic. Residue alanine 10 coordinates Ca(2+). A helical membrane pass occupies residues leucine 32–arginine 51. Over leucine 52–arginine 60 the chain is Extracellular. Residues tyrosine 61–leucine 82 traverse the membrane as a helical segment. The Cytoplasmic portion of the chain corresponds to glycine 83–threonine 237. A helical membrane pass occupies residues glutamine 238–arginine 255. At glutamine 256–proline 274 the chain is on the extracellular side. Residues isoleucine 275–leucine 288 form a helical membrane-spanning segment. The Cytoplasmic portion of the chain corresponds to lysine 289–lysine 668. Ca(2+)-binding residues include glutamine 293, asparagine 296, aspartate 301, and aspartate 304. Disordered stretches follow at residues serine 400–cysteine 454, arginine 473–serine 493, and threonine 532–serine 570. A compositionally biased stretch (basic and acidic residues) spans proline 425–leucine 436. Residues threonine 475–serine 489 show a composition bias toward low complexity. A compositionally biased stretch (polar residues) spans threonine 532 to proline 545.

Belongs to the anion channel-forming bestrophin (TC 1.A.46) family. Calcium-sensitive chloride channel subfamily. Present in skeletal muscle and weakly in brain, spinal cord, bone marrow and retina.

The protein resides in the cell membrane. The catalysed reaction is chloride(in) = chloride(out). In terms of biological role, ligand-gated anion channel that allows the movement of chloride monoatomic anions across cell membranes when activated by calcium (Ca2+). This Homo sapiens (Human) protein is Bestrophin-3.